A 787-amino-acid polypeptide reads, in one-letter code: Signal transducer and activator of transcription 5B (787 aa).

Position 90 is a phosphotyrosine (Tyr90). Ser128 carries the phosphoserine modification. In terms of domain architecture, SH2 spans 589–686 (WNDGAILGFV…EVYSKYYTPV (98 aa)). The residue at position 682 (Tyr682) is a Phosphotyrosine. A Phosphotyrosine; by HCK, JAK and PTK6 modification is found at Tyr699.

This sequence belongs to the transcription factor STAT family. Upon activation, forms a homodimer or a heterodimer with a related family member. Binds NR3C1. Interacts with NCOA1. Interacts with NMI. Interacts with SOCS7. Interacts (via SH2 domain) with INSR. Interacts with CPEB3; this inhibits STAT5B-mediated transcriptional activation. Post-translationally, tyrosine phosphorylated in response to signaling via activated KIT, resulting in translocation to the nucleus. Tyrosine phosphorylated in response to signaling via activated FLT3; wild-type FLT3 results in much weaker phosphorylation than constitutively activated mutant FLT3. Alternatively, can be phosphorylated by JAK2. Phosphorylation at Tyr-699 by PTK6 or HCK leads to an increase of its transcriptional activity.

It localises to the cytoplasm. It is found in the nucleus. Functionally, carries out a dual function: signal transduction and activation of transcription. Mediates cellular responses to the cytokine KITLG/SCF and other growth factors. Binds to the GAS element and activates PRL-induced transcription. Positively regulates hematopoietic/erythroid differentiation. This chain is Signal transducer and activator of transcription 5B (STAT5B), found in Bos taurus (Bovine).